The chain runs to 92 residues: MPKLEMMLLVLLILPLPYFDAAGGQAVQGDGHGDGMDRYLQRDDREARITCQPRGRSKWGRCCLTQMCGNYCCYKHGCRCVYHSWRGHGCSC.

The signal sequence occupies residues 1–24 (MPKLEMMLLVLLILPLPYFDAAGG). The propeptide occupies 25 to 45 (QAVQGDGHGDGMDRYLQRDDR). Cystine bridges form between C63–C72, C68–C80, C73–C90, and C78–C92.

It belongs to the conotoxin D superfamily. In terms of assembly, homodimer; disulfide-linked. Post-translationally, the homodimer contains 10 disulfide bonds. Expressed by the venom duct.

It localises to the secreted. In terms of biological role, alpha-conotoxins act on postsynaptic membranes, they bind to the nicotinic acetylcholine receptors (nAChR) and thus inhibit them. Through its two C-terminal domains, this homodimeric protein would bind to two nAChR allosteric sites, located outside the nAChR C-loop of the principal binding face and at the adjacent binding interface in a clockwise direction. Component 4b which seems to correspond to this toxin blocks both neuronal and muscular subtypes: human alpha-7/CHRNA7 (IC(50)=125 nM), human alpha-3-beta-2 (CHRNA3-CHRNB2) (IC(50)=282 nM), human alpha-4-beta-2 (CHRNA4-CHRNB2) (IC(50)=697 nM), mouse adult muscular subtype alpha-1-beta-1-delta-epsilon (CHRNA1-CHRNB1-CHRND-CHRNE) (IC(50)=351 nM), and mouse fetal muscular subtype alpha-1-beta-1-gamma-delta (CHRNA1-CHRNB1-CHRNG-CHRND) (IC(50)=447 nM). It shows different dissociation rates towards the different subtypes, with a very slow rate towards alpha-7 subtype (almost irreversible), followed by the adult muscular subtype, the fetal muscular subtype, alpha-3-beta-2 and alpha-4-beta-2 (almost entirely reversible within a few minutes of washing). This is Alpha-conotoxin FrXXA 2 from Conus fergusoni (Ferguson's cone).